We begin with the raw amino-acid sequence, 560 residues long: DNA ligase B (560 aa).

Lysine 128 serves as the catalytic N6-AMP-lysine intermediate.

Belongs to the NAD-dependent DNA ligase family. LigB subfamily.

It catalyses the reaction NAD(+) + (deoxyribonucleotide)n-3'-hydroxyl + 5'-phospho-(deoxyribonucleotide)m = (deoxyribonucleotide)n+m + AMP + beta-nicotinamide D-nucleotide.. Functionally, catalyzes the formation of phosphodiester linkages between 5'-phosphoryl and 3'-hydroxyl groups in double-stranded DNA using NAD as a coenzyme and as the energy source for the reaction. In Azotobacter vinelandii (strain DJ / ATCC BAA-1303), this protein is DNA ligase B.